A 329-amino-acid polypeptide reads, in one-letter code: Malate dehydrogenase (329 aa).

12–18 serves as a coordination point for NAD(+); the sequence is GAAGQIG. Residues Arg95 and Arg101 each coordinate substrate. Residues Asn108, Gln115, and 132–134 contribute to the NAD(+) site; that span reads VGN. Positions 134 and 165 each coordinate substrate. His190 acts as the Proton acceptor in catalysis.

This sequence belongs to the LDH/MDH superfamily. MDH type 2 family.

It catalyses the reaction (S)-malate + NAD(+) = oxaloacetate + NADH + H(+). In terms of biological role, catalyzes the reversible oxidation of malate to oxaloacetate. The sequence is that of Malate dehydrogenase from Janthinobacterium sp. (strain Marseille) (Minibacterium massiliensis).